We begin with the raw amino-acid sequence, 80 residues long: Acyl carrier protein (80 aa).

The Carrier domain occupies 4-79 (EAILEKVRSI…DAVKYIEDKQ (76 aa)). The residue at position 39 (Ser-39) is an O-(pantetheine 4'-phosphoryl)serine.

Belongs to the acyl carrier protein (ACP) family. Post-translationally, 4'-phosphopantetheine is transferred from CoA to a specific serine of apo-ACP by AcpS. This modification is essential for activity because fatty acids are bound in thioester linkage to the sulfhydryl of the prosthetic group.

The protein localises to the cytoplasm. It participates in lipid metabolism; fatty acid biosynthesis. In terms of biological role, carrier of the growing fatty acid chain in fatty acid biosynthesis. The chain is Acyl carrier protein from Prochlorococcus marinus (strain SARG / CCMP1375 / SS120).